The following is a 1105-amino-acid chain: Probable diguanylate cyclase DgcE (1105 aa).

Transmembrane regions (helical) follow at residues Leu9 to Phe29, Gln38 to Tyr58, Met64 to Phe84, Ser88 to Leu108, Leu127 to Thr147, Phe156 to Leu176, Leu190 to Leu207, Tyr211 to Val228, Phe236 to Leu256, and Trp270 to Phe290. The region spanning Ser300–Glu370 is the PAS 1 domain. PAC domains lie at Tyr374–Gln426 and Phe501–Gln552. A PAS 2 domain is found at Glu553–Thr623. Residues Ser626 to Tyr680 enclose the PAC 3 domain. In terms of domain architecture, GGDEF spans Gln712–Pro845. Position 720 (Asp720) interacts with Mg(2+). 3 residues coordinate substrate: Asn728, His733, and Asp737. A Mg(2+)-binding site is contributed by Asp763. The active-site Proton acceptor is Asp763. Arg783 serves as a coordination point for substrate. In terms of domain architecture, EAL spans Ala855–Ile1104.

Homodimer. The cofactor is Mg(2+).

It localises to the cell inner membrane. It carries out the reaction 2 GTP = 3',3'-c-di-GMP + 2 diphosphate. It participates in purine metabolism; 3',5'-cyclic di-GMP biosynthesis. Functionally, catalyzes the synthesis of cyclic-di-GMP (c-di-GMP) via the condensation of 2 GTP molecules. Involved in the control of the switch from cell motility to adhesion via regulation of cellular levels of c-di-GMP. Part of a signaling cascade that regulates curli biosynthesis. The cascade is composed of two c-di-GMP control modules, in which c-di-GMP controlled by the DgcE/PdeH pair (module I) regulates the activity of the DgcM/PdeR pair (module II), which in turn regulates activity of the transcription factor MlrA and expression of the master biofilm regulator csgD. This chain is Probable diguanylate cyclase DgcE, found in Escherichia coli (strain K12).